The chain runs to 259 residues: Methionine aminopeptidase (259 aa).

His78 contributes to the substrate binding site. Residues Asp95, Asp106, and His169 each coordinate a divalent metal cation. Residue His176 participates in substrate binding. An a divalent metal cation-binding site is contributed by Glu202. Residue Trp220 coordinates substrate. Position 234 (Glu234) interacts with a divalent metal cation.

Belongs to the peptidase M24A family. Methionine aminopeptidase type 1 subfamily. In terms of assembly, monomer. The cofactor is Co(2+). Requires Zn(2+) as cofactor. Mn(2+) is required as a cofactor. It depends on Fe(2+) as a cofactor.

The enzyme catalyses Release of N-terminal amino acids, preferentially methionine, from peptides and arylamides.. Functionally, removes the N-terminal methionine from nascent proteins. The N-terminal methionine is often cleaved when the second residue in the primary sequence is small and uncharged (Met-Ala-, Cys, Gly, Pro, Ser, Thr, or Val). Requires deformylation of the N(alpha)-formylated initiator methionine before it can be hydrolyzed. The protein is Methionine aminopeptidase of Rickettsia prowazekii (strain Madrid E).